The primary structure comprises 807 residues: MSKQDSLWFKSLRWLQRKLVHTVVVPHDPFDDLNLDPSKPLVYVMKTESVSDIAALSEMTEKLGLPSPYEELEVNGIRAPRVVCLEGSKPLFGQREGGEQYIDYFKRLLSVHKQNLELDIQLVPVSLYWGRTPGKEDDTMRAAVLERQNPTWLRKCLMILFLGRHNFVQFSNAVSLRYMADEHGTDKRIAQKLARVARAHFERQRKVMTGPQLPKRQALFHALLKSDSITKAIKEEAASKKISESEARAKAMEYLDEVAADYSDSLVRIAERFLTWLWNKLYKGINIKGAEQVRQLHHDGHEIVYVPCHRSHMDYLLLSYILYYQGMVPPHIAAGINLNFWPAGPAFRRGGAFFIRRSFGGNKLYTAVFREYLDQLFTKGYSVEYFTEGGRSRTGRLLAPKTGMLAMTLNSVLRGVERPVTLVPVYLGYDHVMEVATYHKELSGKKKKKESVWQIFGAIRKLGNFGQGYVNFGEPITLHNFLNEQVPSWRDDIAKDPDQKPTWLTPVVNTLANQVMTNINDAAAVSSVTLTSMVLLASEQNALERSQLEKQLDLYLTLLKERPYTDYTSVPDGTGHDLVSQGLELKKLQIESDPLGDIISIDQSIAITMTYYRNNIIHLMVLPSLIAACLLRKENCGRNDVISIVNDFYPLLEAELFMGIEDPSQYANQILDILVAQGLVVECDHFEVVDSSINQLLLLSGTISETMQRYAILFNLLEVKPNMERSELEKDSHRLAQRLGALHGITAPEFYDKKLYATLSVKLKELGYLTDNQGCSDIKRIKERANLLLRSSVKQTIVDSVHAEHIA.

Positions 308–313 match the HXXXXD motif motif; that stretch reads CHRSHM.

This sequence belongs to the GPAT/DAPAT family.

The protein resides in the cell inner membrane. It carries out the reaction sn-glycerol 3-phosphate + an acyl-CoA = a 1-acyl-sn-glycero-3-phosphate + CoA. Its pathway is phospholipid metabolism; CDP-diacylglycerol biosynthesis; CDP-diacylglycerol from sn-glycerol 3-phosphate: step 1/3. The protein is Glycerol-3-phosphate acyltransferase of Shewanella halifaxensis (strain HAW-EB4).